The chain runs to 510 residues: RanBP-type and C3HC4-type zinc finger-containing protein 1 (510 aa).

Residue M1 is modified to N-acetylmethionine. Residues 1–220 form an interaction with IRF3 region; it reads MDEKTKKAEE…PGCEMCCRAR (220 aa). The tract at residues 1–270 is interaction with TAB2; sequence MDEKTKKAEE…NYLQHVQLDQ (270 aa). Phosphoserine is present on S50. The Ubiquitin-like domain occupies 55-119; it reads IRLWVSVEDA…DQETLHSHGV (65 aa). An interaction with RNF31 region spans residues 69 to 131; the sequence is VTIWLTVRPD…NGDSAYLYLL (63 aa). Residues 160-192 form a disordered region; sequence LTLQPRGPLEPGPPKPGVPQEPGRGQPDAVPEP. The span at 167–178 shows a compositional bias: pro residues; it reads PLEPGPPKPGVP. The RanBP2-type zinc finger occupies 193–222; it reads PPVGWQCPGCTFINKPTRPGCEMCCRARPE. A coiled-coil region spans residues 233–261; that stretch reads DEEERARLAGEEEALRQYQQRKQQQQEGN. The interval 278–506 is TRIAD supradomain; sequence EPAECPVCYS…VNGIPCHPSC (229 aa). Zn(2+) is bound by residues C282, C285, C300, H302, C305, C308, and C323. The segment at 282-332 adopts an RING-type 1 zinc-finger fold; that stretch reads CPVCYSVLAPGEAVVLRECLHTFCRECLQGTIRNSQEAEVSCPFIDNTYSC. A Phosphotyrosine modification is found at Y330. C332, C371, C376, C391, C394, C399, C402, H406, C411, C447, and C450 together coordinate Zn(2+). The IBR-type zinc finger occupies 351–411; it reads QRFLDLGISI…CKAIHEQMNC (61 aa). An RING-type 2; atypical zinc finger spans residues 447-476; the sequence is CPQCQIVVQKKDGCDWIRCTVCHTEICWVT. C460 is a catalytic residue. Residues C465 and C468 each coordinate Zn(2+).

This sequence belongs to the RBR family. As to quaternary structure, component of the LUBAC complex (linear ubiquitin chain assembly complex) which consists of SHARPIN, RBCK1 and RNF31. LUBAC has a MW of approximately 600 kDa suggesting a heteromultimeric assembly of its subunits. Interacts with beta-I-type (PRKCB1) and zeta-type protein kinase C (PRKCZ). Interacts with UBE2L3. Interacts with PRKCH. Associates with the TNF-R1 signaling complex (TNF-RSC) in a stimulation-dependent manner. Interacts with EYA1, TAB2, TAB3, MAP3K7 TRAF6 and RIPK1. Interacts with IRF3. In terms of assembly, interacts with IREB2 only in iron-rich conditions. (Microbial infection) Interacts with hepatitis B virus/HBV protein HBx; this interaction is required to activate transcription of the viral genome. Post-translationally, auto-ubiquitinated. Auto-ubiquitination leads to degradation by the proteasome. In terms of processing, phosphorylated. In vitro, phosphorylation inhibits auto-ubiquitination activity. (Microbial infection) Ubiquitinated by S.flexneri E3 ubiquitin-protein ligases IpaH1.4 and IpaH2.5, leading to its degradation by the proteasome, thereby preventing formation of the bacterial ubiquitin coat and activation of innate immunity.

The enzyme catalyses [E2 ubiquitin-conjugating enzyme]-S-ubiquitinyl-L-cysteine + [acceptor protein]-L-lysine = [E2 ubiquitin-conjugating enzyme]-L-cysteine + [acceptor protein]-N(6)-ubiquitinyl-L-lysine.. The protein operates within protein modification; protein ubiquitination. Its function is as follows. E3 ubiquitin-protein ligase, which accepts ubiquitin from specific E2 ubiquitin-conjugating enzymes, such as UBE2L3/UBCM4, and then transfers it to substrates. Functions as an E3 ligase for oxidized IREB2 and both heme and oxygen are necessary for IREB2 ubiquitination. Promotes ubiquitination of TAB2 and IRF3 and their degradation by the proteasome. Component of the LUBAC complex which conjugates linear ('Met-1'-linked) polyubiquitin chains to substrates and plays a key role in NF-kappa-B activation and regulation of inflammation. LUBAC conjugates linear polyubiquitin to IKBKG and RIPK1 and is involved in activation of the canonical NF-kappa-B and the JNK signaling pathways. Linear ubiquitination mediated by the LUBAC complex interferes with TNF-induced cell death and thereby prevents inflammation. LUBAC is recruited to the TNF-R1 signaling complex (TNF-RSC) following polyubiquitination of TNF-RSC components by BIRC2 and/or BIRC3 and to conjugate linear polyubiquitin to IKBKG and possibly other components contributing to the stability of the complex. The LUBAC complex is also involved in innate immunity by conjugating linear polyubiquitin chains at the surface of bacteria invading the cytosol to form the ubiquitin coat surrounding bacteria. LUBAC is not able to initiate formation of the bacterial ubiquitin coat, and can only promote formation of linear polyubiquitins on pre-existing ubiquitin. The bacterial ubiquitin coat acts as an 'eat-me' signal for xenophagy and promotes NF-kappa-B activation. Together with OTULIN, the LUBAC complex regulates the canonical Wnt signaling during angiogenesis. Binds polyubiquitin of different linkage types. This chain is RanBP-type and C3HC4-type zinc finger-containing protein 1 (RBCK1), found in Homo sapiens (Human).